The primary structure comprises 248 residues: Serine/arginine-rich splicing factor 1 (248 aa).

S2 carries the post-translational modification N-acetylserine. Residue S2 is modified to Phosphoserine. The RRM 1 domain maps to C16 to S91. K30 participates in a covalent cross-link: Glycyl lysine isopeptide (Lys-Gly) (interchain with G-Cter in SUMO2). Residue K38 is modified to N6-acetyllysine; alternate. K38 is covalently cross-linked (Glycyl lysine isopeptide (Lys-Gly) (interchain with G-Cter in SUMO2); alternate). The interval F88–W134 is disordered. 3 positions are modified to asymmetric dimethylarginine; alternate: R93, R97, and R109. Omega-N-methylarginine; alternate occurs at positions 93, 97, and 109. Gly residues predominate over residues R93–P108. Residue R111 is modified to Omega-N-methylarginine. The RRM 2 domain occupies N121–D195. A Phosphoserine modification is found at S133. K179 carries the N6-acetyllysine modification. A disordered region spans residues R191–T248. Residues R198–R247 form an interaction with SAFB1 region. Phosphoserine is present on residues S199 and S201. Y202 is modified (phosphotyrosine). Residues S205, S207, S209, S231, S234, and S238 each carry the phosphoserine modification. Basic residues predominate over residues S205–T248.

This sequence belongs to the splicing factor SR family. In terms of assembly, consists of two polypeptides of p32 and p33. Identified in the spliceosome C complex. Component of a ribonucleoprotein complex containing mRNAs and RNA-binding proteins including DDX5, HNRNPH2 and SRSF1 as well as splicing regulator ARVCF. In vitro, self-associates and binds SRSF2, SNRNP70 and U2AF1 but not U2AF2. Binds SREK1/SFRS12. Interacts with SAFB/SAFB1. Interacts with PSIP1/LEDGF. Interacts with RSRC1 (via Arg/Ser-rich domain). Interacts with ZRSR2/U2AF1-RS2. Interacts with CCDC55 (via C-terminus). Interacts with SRPK1 and a sliding docking interaction is essential for its sequential and processive phosphorylation by SRPK1. Interacts with NXF1. Interacts with CCNL1, CCNL2 and CDK11B. Interacts with RRP1B. Interacts (when phosphorylated in its RS domain) with TNPO3; promoting nuclear import. Interacts with ILDR1 (via C-terminus) and ILDR2. Post-translationally, phosphorylated by CLK1, CLK2, CLK3 and CLK4. Phosphorylated by SRPK1 at multiple serines in its RS domain via a directional (C-terminal to N-terminal) and a dual-track mechanism incorporating both processive phosphorylation (in which the kinase stays attached to the substrate after each round of phosphorylation) and distributive phosphorylation steps (in which the kinase and substrate dissociate after each phosphorylation event). The RS domain of SRSF1 binds to a docking groove in the large lobe of the kinase domain of SRPK1 and this induces certain structural changes in SRPK1 and/or RRM 2 domain of SRSF1, allowing RRM 2 to bind the kinase and initiate phosphorylation. The cycles continue for several phosphorylation steps in a processive manner (steps 1-8) until the last few phosphorylation steps (approximately steps 9-12). During that time, a mechanical stress induces the unfolding of the beta-4 motif in RRM 2, which then docks at the docking groove of SRPK1. This also signals RRM 2 to begin to dissociate, which facilitates SRSF1 dissociation after phosphorylation is completed. Asymmetrically dimethylated at arginines, probably by PRMT1, methylation promotes localization to nuclear speckles.

The protein localises to the cytoplasm. The protein resides in the nucleus speckle. Its function is as follows. Plays a role in preventing exon skipping, ensuring the accuracy of splicing and regulating alternative splicing. Interacts with other spliceosomal components, via the RS domains, to form a bridge between the 5'- and 3'-splice site binding components, U1 snRNP and U2AF. Can stimulate binding of U1 snRNP to a 5'-splice site-containing pre-mRNA. Binds to purine-rich RNA sequences, either the octamer, 5'-RGAAGAAC-3' (r=A or G) or the decamers, AGGACAGAGC/AGGACGAAGC. Binds preferentially to the 5'-CGAGGCG-3' motif in vitro. Three copies of the octamer constitute a powerful splicing enhancer in vitro, the ASF/SF2 splicing enhancer (ASE) which can specifically activate ASE-dependent splicing. May function as export adapter involved in mRNA nuclear export through the TAP/NXF1 pathway. This is Serine/arginine-rich splicing factor 1 (SRSF1) from Bos taurus (Bovine).